The primary structure comprises 124 residues: Small ribosomal subunit protein uS12 (124 aa).

A 3-methylthioaspartic acid modification is found at Asp89.

This sequence belongs to the universal ribosomal protein uS12 family. As to quaternary structure, part of the 30S ribosomal subunit. Contacts proteins S8 and S17. May interact with IF1 in the 30S initiation complex.

With S4 and S5 plays an important role in translational accuracy. Its function is as follows. Interacts with and stabilizes bases of the 16S rRNA that are involved in tRNA selection in the A site and with the mRNA backbone. Located at the interface of the 30S and 50S subunits, it traverses the body of the 30S subunit contacting proteins on the other side and probably holding the rRNA structure together. The combined cluster of proteins S8, S12 and S17 appears to hold together the shoulder and platform of the 30S subunit. This chain is Small ribosomal subunit protein uS12 (rpsL), found in Mannheimia haemolytica (Pasteurella haemolytica).